The sequence spans 491 residues: Glucose N-acetyltransferase 1 (491 aa).

At 1–10 (MRLISKRRIR) the chain is on the cytoplasmic side. Residues 11–31 (FIVFILFGVLTVFVVSRLVVH) form a helical; Signal-anchor for type II membrane protein membrane-spanning segment. Topologically, residues 32-491 (FQYNQEIKFY…YIQSREICLV (460 aa)) are lumenal. N-linked (GlcNAc...) asparagine glycosylation is found at Asn136, Asn177, and Asn187. Residues 198–200 (DND) carry the DXD motif. N-linked (GlcNAc...) asparagine glycosylation occurs at Asn425.

This sequence belongs to the GNT1 family. In terms of processing, N-glycosylated.

It is found in the golgi apparatus membrane. It localises to the vacuole membrane. Functionally, N-acetylglucosaminyltransferase involved in the Golgi-specific modification of N-linked glycans. The protein is Glucose N-acetyltransferase 1 (GNT1) of Saccharomyces cerevisiae (strain ATCC 204508 / S288c) (Baker's yeast).